The following is a 959-amino-acid chain: Isoleucine--tRNA ligase (959 aa).

The short motif at 60-70 (PYANGSLHMGH) is the 'HIGH' region element. E569 lines the L-isoleucyl-5'-AMP pocket. The short motif at 610-614 (KMSKS) is the 'KMSKS' region element. K613 contacts ATP. C928, C931, C948, and C951 together coordinate Zn(2+).

This sequence belongs to the class-I aminoacyl-tRNA synthetase family. IleS type 1 subfamily. As to quaternary structure, monomer. Zn(2+) is required as a cofactor.

The protein resides in the cytoplasm. It carries out the reaction tRNA(Ile) + L-isoleucine + ATP = L-isoleucyl-tRNA(Ile) + AMP + diphosphate. Catalyzes the attachment of isoleucine to tRNA(Ile). As IleRS can inadvertently accommodate and process structurally similar amino acids such as valine, to avoid such errors it has two additional distinct tRNA(Ile)-dependent editing activities. One activity is designated as 'pretransfer' editing and involves the hydrolysis of activated Val-AMP. The other activity is designated 'posttransfer' editing and involves deacylation of mischarged Val-tRNA(Ile). In Rippkaea orientalis (strain PCC 8801 / RF-1) (Cyanothece sp. (strain PCC 8801)), this protein is Isoleucine--tRNA ligase.